The sequence spans 141 residues: VLSPADKTNVKAAWAKVGNHAADFGAEALERMFMSFPSTKTYFSHFDLGHNSTQVKGHGKKVADALTKAVGHLDTLPDALSDLSDLHAHKLRVDPVNFKLLSHCLLVTLAAHLPGDFTPSVHASLDKFLASVSTVLTSKYR.

Residues 1–141 (VLSPADKTNV…VSTVLTSKYR (141 aa)) form the Globin domain. S3 is subject to Phosphoserine. The residue at position 7 (K7) is an N6-succinyllysine. A Phosphothreonine modification is found at T8. K11 is modified (N6-succinyllysine). K16 bears the N6-acetyllysine; alternate mark. K16 is subject to N6-succinyllysine; alternate. The residue at position 35 (S35) is a Phosphoserine. K40 is modified (N6-succinyllysine). O2 is bound at residue H58. H87 is a binding site for heme b. Position 102 is a phosphoserine (S102). Residue T108 is modified to Phosphothreonine. Phosphoserine occurs at positions 124 and 131. 2 positions are modified to phosphothreonine: T134 and T137. Residue S138 is modified to Phosphoserine.

It belongs to the globin family. Heterotetramer of two alpha chains and two beta chains. In terms of tissue distribution, red blood cells.

Functionally, involved in oxygen transport from the lung to the various peripheral tissues. Hemopressin acts as an antagonist peptide of the cannabinoid receptor CNR1. Hemopressin-binding efficiently blocks cannabinoid receptor CNR1 and subsequent signaling. The protein is Hemoglobin subunit alpha (HBA) of Physeter macrocephalus (Sperm whale).